The sequence spans 691 residues: L-type lectin-domain containing receptor kinase S.6 (691 aa).

Positions 1–25 are cleaved as a signal peptide; it reads MNHHHYSLVIFHLILFLSLDFPTLS. The Extracellular segment spans residues 26-311; that stretch reads HRFSPPLQNL…VVGLKIPVWS (286 aa). Positions 27-257 are legume-lectin like; the sequence is RFSPPLQNLT…LHIVERWKFR (231 aa). Residues Asn-34 and Asn-89 are each glycosylated (N-linked (GlcNAc...) asparagine). The helical transmembrane segment at 312 to 332 threads the bilayer; the sequence is LLPGLAAIVILVAFIVFSLIC. Topologically, residues 333 to 691 are cytoplasmic; it reads GKKRISEEAD…PWMTPKSHFS (359 aa). The Protein kinase domain maps to 366–653; the sequence is FNENAIVGQG…IRGEAPLPVL (288 aa). Residues 372–380 and Lys-394 contribute to the ATP site; that span reads VGQGASATV. Asp-500 (proton acceptor) is an active-site residue.

It in the C-terminal section; belongs to the protein kinase superfamily. Ser/Thr protein kinase family. The protein in the N-terminal section; belongs to the leguminous lectin family.

Its subcellular location is the cell membrane. The catalysed reaction is L-seryl-[protein] + ATP = O-phospho-L-seryl-[protein] + ADP + H(+). The enzyme catalyses L-threonyl-[protein] + ATP = O-phospho-L-threonyl-[protein] + ADP + H(+). Its function is as follows. Involved in resistance response to the pathogenic oomycetes Phytophthora infestans and Phytophthora capsici and to the pathogenic bacteria Pseudomonas syringae. The polypeptide is L-type lectin-domain containing receptor kinase S.6 (Arabidopsis thaliana (Mouse-ear cress)).